We begin with the raw amino-acid sequence, 246 residues long: Large ribosomal subunit protein uL30 (246 aa).

The protein belongs to the universal ribosomal protein uL30 family.

Functionally, binds to G-rich structures in 28S rRNA and in mRNAs. Plays a regulatory role in the translation apparatus; inhibits cell-free translation of mRNAs. The protein is Large ribosomal subunit protein uL30 (rpl7) of Dictyostelium discoideum (Social amoeba).